The chain runs to 224 residues: Iron-sulfur cluster repair protein ScdA (224 aa).

Belongs to the RIC family. ScdA subfamily. Homodimer.

Its subcellular location is the cytoplasm. In terms of biological role, di-iron-containing protein involved in the repair of iron-sulfur clusters damaged by oxidative and nitrosative stress conditions. In Staphylococcus epidermidis (strain ATCC 35984 / DSM 28319 / BCRC 17069 / CCUG 31568 / BM 3577 / RP62A), this protein is Iron-sulfur cluster repair protein ScdA.